The following is a 133-amino-acid chain: MKTNHPETYDGRQDHIPSLQTPEIESFTNVYEGKDYTIDFTVPEFTAVCPKTGLPDFGVILVSYIPNKRCIELKSFKEYILSYRNVGIFHEFLVNKILEDVIKSIDPKYLKVIGDYNARGGIKTIVTREYKKP.

The active-site Thioimide intermediate is the C49. Residue D56 is the Proton donor of the active site. Residues 71-73 (IEL) and 90-91 (HE) contribute to the substrate site.

This sequence belongs to the GTP cyclohydrolase I family. QueF type 1 subfamily.

Its subcellular location is the cytoplasm. It carries out the reaction 7-aminomethyl-7-carbaguanine + 2 NADP(+) = 7-cyano-7-deazaguanine + 2 NADPH + 3 H(+). It functions in the pathway tRNA modification; tRNA-queuosine biosynthesis. Functionally, catalyzes the NADPH-dependent reduction of 7-cyano-7-deazaguanine (preQ0) to 7-aminomethyl-7-deazaguanine (preQ1). The polypeptide is NADPH-dependent 7-cyano-7-deazaguanine reductase (Leptospira interrogans serogroup Icterohaemorrhagiae serovar copenhageni (strain Fiocruz L1-130)).